We begin with the raw amino-acid sequence, 109 residues long: MYRTSRINNAPVVASQHDYDRDQIKRELNSLRRNVHDLCTRSGTSFDCNKFLRSDDMTPVVTTITPKRTADYKITEYVGDVKTIKPSNRPLVESGPLVREAAKYGECIV.

This is an uncharacterized protein from Autographa californica nuclear polyhedrosis virus (AcMNPV).